The chain runs to 1624 residues: Pappalysin-1 (1624 aa).

The signal sequence occupies residues 1-22 (MRLWSWVLRLGLLSAALGCGLA). A propeptide spanning residues 23-81 (ERPRRVRRDPRAVRPPRPAAGPATCATRAARGRRASPPPPPGGAWEAVRVPRRRQQRAA) is cleaved from the precursor. The disordered stretch occupies residues 28–93 (VRRDPRAVRP…AEEPSPPSRA (66 aa)). Over residues 42–51 (AGPATCATRA) the composition is skewed to low complexity. Cystine bridges form between Cys-141–Cys-232, Cys-324–Cys-619, Cys-329–Cys-654, Cys-411–Cys-425, Cys-421–Cys-437, Cys-454–Cys-470, Cys-471–Cys-482, Cys-580–Cys-597, Cys-584–Cys-609, Cys-707–Cys-875, Cys-710–Cys-878, Cys-750–Cys-832, Cys-772–Cys-778, Cys-944–Cys-972, Cys-957–Cys-968, Cys-980–Cys-987, and Cys-996–Cys-1008. The interval 272–583 (RGLHTPLPQL…ISEIQSCSDP (312 aa)) is metalloprotease. 2 N-linked (GlcNAc...) asparagine glycosylation sites follow: Asn-387 and Asn-398. Asn-426 carries an N-linked (GlcNAc...) asparagine glycan. Asn-516 carries an N-linked (GlcNAc...) asparagine glycan. A Zn(2+)-binding site is contributed by His-559. Glu-560 is a catalytic residue. Residues His-563 and His-569 each coordinate Zn(2+). Asn-598, Asn-616, and Asn-722 each carry an N-linked (GlcNAc...) asparagine glycan. Asn-822 carries N-linked (GlcNAc...) asparagine glycosylation. An N-linked (GlcNAc...) asparagine glycan is attached at Asn-1023. 19 cysteine pairs are disulfide-bonded: Cys-1033/Cys-1067, Cys-1048/Cys-1136, Cys-1189/Cys-1202, Cys-1212/Cys-1266, Cys-1224/Cys-1235, Cys-1239/Cys-1277, Cys-1282/Cys-1326, Cys-1297/Cys-1307, Cys-1311/Cys-1339, Cys-1343/Cys-1396, Cys-1359/Cys-1370, Cys-1374/Cys-1407, Cys-1412/Cys-1455, Cys-1425/Cys-1435, Cys-1439/Cys-1468, Cys-1475/Cys-1536, Cys-1489/Cys-1499, Cys-1503/Cys-1551, and Cys-1555/Cys-1573. Sushi domains are found at residues 1210 to 1279 (ADCP…ACEP), 1280 to 1341 (VDCG…LCEL), 1342 to 1409 (MCLA…TCVP), 1410 to 1470 (VTCD…VCRE), and 1473 to 1553 (GQCS…HCVK). 2 N-linked (GlcNAc...) asparagine glycosylation sites follow: Asn-1219 and Asn-1223. The N-linked (GlcNAc...) asparagine glycan is linked to Asn-1320. Asn-1516 is a glycosylation site (N-linked (GlcNAc...) asparagine).

This sequence belongs to the peptidase M43B family. Homodimer; disulfide-linked. In pregnancy serum, predominantly found as a disulfide-linked 2:2 heterotetramer with the proform of PRG2. The cofactor is Zn(2+). In terms of tissue distribution, detected in kidney, spleen, brain, ovary, breast, skin, prostate, uterus, and placenta.

It is found in the secreted. It catalyses the reaction Cleavage of the 135-Met-|-Lys-136 bond in insulin-like growth factor binding protein (IGFBP)-4, and the 143-Ser-|-Lys-144 bond in IGFBP-5.. Its function is as follows. Metalloproteinase which specifically cleaves IGFBP-4 and IGFBP-5, resulting in release of bound IGF. Cleavage of IGFBP-4 is dramatically enhanced by the presence of IGF, whereas cleavage of IGFBP-5 is slightly inhibited by the presence of IGF. Isoform 2 cleaves IGFBP-4 very slowly compared to PAPP-A, but its ability to cleave IGFBP-5 is unaffected. The sequence is that of Pappalysin-1 (Pappa) from Mus musculus (Mouse).